Consider the following 488-residue polypeptide: Proline--tRNA ligase (488 aa).

Belongs to the class-II aminoacyl-tRNA synthetase family. ProS type 3 subfamily. As to quaternary structure, homodimer.

It localises to the cytoplasm. The catalysed reaction is tRNA(Pro) + L-proline + ATP = L-prolyl-tRNA(Pro) + AMP + diphosphate. Its function is as follows. Catalyzes the attachment of proline to tRNA(Pro) in a two-step reaction: proline is first activated by ATP to form Pro-AMP and then transferred to the acceptor end of tRNA(Pro). This Pyrobaculum aerophilum (strain ATCC 51768 / DSM 7523 / JCM 9630 / CIP 104966 / NBRC 100827 / IM2) protein is Proline--tRNA ligase.